The following is a 242-amino-acid chain: UDP-2,3-diacylglucosamine hydrolase (242 aa).

Mn(2+) is bound by residues aspartate 9, histidine 11, aspartate 42, asparagine 79, and histidine 114. Position 79–80 (79–80 (NR)) interacts with substrate. Residues aspartate 122, serine 160, asparagine 164, lysine 167, and histidine 195 each coordinate substrate. Residues histidine 195 and histidine 197 each coordinate Mn(2+).

The protein belongs to the LpxH family. Mn(2+) serves as cofactor.

It is found in the cell inner membrane. It carries out the reaction UDP-2-N,3-O-bis[(3R)-3-hydroxytetradecanoyl]-alpha-D-glucosamine + H2O = 2-N,3-O-bis[(3R)-3-hydroxytetradecanoyl]-alpha-D-glucosaminyl 1-phosphate + UMP + 2 H(+). It functions in the pathway glycolipid biosynthesis; lipid IV(A) biosynthesis; lipid IV(A) from (3R)-3-hydroxytetradecanoyl-[acyl-carrier-protein] and UDP-N-acetyl-alpha-D-glucosamine: step 4/6. Its function is as follows. Hydrolyzes the pyrophosphate bond of UDP-2,3-diacylglucosamine to yield 2,3-diacylglucosamine 1-phosphate (lipid X) and UMP by catalyzing the attack of water at the alpha-P atom. Involved in the biosynthesis of lipid A, a phosphorylated glycolipid that anchors the lipopolysaccharide to the outer membrane of the cell. This is UDP-2,3-diacylglucosamine hydrolase from Shewanella loihica (strain ATCC BAA-1088 / PV-4).